The sequence spans 140 residues: Large ribosomal subunit protein bL17 (140 aa).

The protein belongs to the bacterial ribosomal protein bL17 family. Part of the 50S ribosomal subunit. Contacts protein L32.

This is Large ribosomal subunit protein bL17 from Hyphomonas neptunium (strain ATCC 15444).